The sequence spans 322 residues: tRNA U34 carboxymethyltransferase (322 aa).

Carboxy-S-adenosyl-L-methionine contacts are provided by residues Lys-91, Trp-105, Lys-110, Gly-129, 179–180 (LE), Met-195, Tyr-199, and Arg-314.

It belongs to the class I-like SAM-binding methyltransferase superfamily. CmoB family. As to quaternary structure, homotetramer.

It catalyses the reaction carboxy-S-adenosyl-L-methionine + 5-hydroxyuridine(34) in tRNA = 5-carboxymethoxyuridine(34) in tRNA + S-adenosyl-L-homocysteine + H(+). Catalyzes carboxymethyl transfer from carboxy-S-adenosyl-L-methionine (Cx-SAM) to 5-hydroxyuridine (ho5U) to form 5-carboxymethoxyuridine (cmo5U) at position 34 in tRNAs. This chain is tRNA U34 carboxymethyltransferase, found in Pseudomonas aeruginosa (strain LESB58).